Reading from the N-terminus, the 750-residue chain is Retron Eco8 OLD nuclease (750 aa).

The interval 1–173 (MTIESIRVKN…IDLYDWNPIW (173 aa)) is ATPase domain N-terminus. Residue 33–37 (NVGKS) participates in ATP binding. Residues 174–260 (KLISNLNSFN…TQSDGTNSNK (87 aa)) are dimerization domain. The segment at 261–390 (FLETLLHLLI…FSDNEARLFF (130 aa)) is ATPase domain C-terminus. The toprim domain stretch occupies residues 391 to 704 (SEYIVFVEGA…SGWVTTFLNY (314 aa)). E398, E402, D450, D452, S623, and E641 together coordinate a divalent metal cation.

Belongs to the class 1 OLD nuclease family. In terms of assembly, homodimer. It depends on a divalent metal cation as a cofactor.

In terms of biological role, probable nuclease member of antiviral defense system retron Eco8, composed of an reverse transcriptase (RT), this nuclease and a non-coding RNA (ncRNA) encoded between them. Expression of retron Eco8 confers protection against bacteriophages T4, T6, T7 and SECphi4, SECphi6 and SECphi18. At multiplicity of infection (MOI) of 0.02 cultures slow growth when infected with SECphi4 but do not collapse, at MOI 2 cultures collapse. When the retron is cloned in another E.coli strain synthesizes msDNA (a branched RNA linked by a 2',5'-phosphodiester bond to a single-stranded DNA). The retron transcript serves as primer and template to the reaction, and codes for the RT. In Escherichia coli, this protein is Retron Eco8 OLD nuclease.